A 225-amino-acid chain; its full sequence is 2-C-methyl-D-erythritol 4-phosphate cytidylyltransferase (225 aa).

It belongs to the IspD/TarI cytidylyltransferase family. IspD subfamily.

It carries out the reaction 2-C-methyl-D-erythritol 4-phosphate + CTP + H(+) = 4-CDP-2-C-methyl-D-erythritol + diphosphate. It functions in the pathway isoprenoid biosynthesis; isopentenyl diphosphate biosynthesis via DXP pathway; isopentenyl diphosphate from 1-deoxy-D-xylulose 5-phosphate: step 2/6. Catalyzes the formation of 4-diphosphocytidyl-2-C-methyl-D-erythritol from CTP and 2-C-methyl-D-erythritol 4-phosphate (MEP). In Clostridium perfringens (strain ATCC 13124 / DSM 756 / JCM 1290 / NCIMB 6125 / NCTC 8237 / Type A), this protein is 2-C-methyl-D-erythritol 4-phosphate cytidylyltransferase.